The following is a 950-amino-acid chain: Protocadherin alpha-1 (950 aa).

The first 29 residues, 1-29 (MVFSRRGGLGARDLLLWLLLLAAWEVGSG), serve as a signal peptide directing secretion. Cadherin domains follow at residues 30 to 133 (QLHY…PPVF), 157 to 242 (AADA…APLF), 243 to 350 (DQAV…APEL), 351 to 455 (AVTS…APAF), 456 to 565 (AQPE…APAL), and 588 to 678 (GHVV…APKA). Residues 30 to 697 (QLHYSIPEEA…GPEAALVDVN (668 aa)) are Extracellular-facing. N-linked (GlcNAc...) asparagine glycans are attached at residues Asn-257 and Asn-265. An N-linked (GlcNAc...) asparagine glycan is attached at Asn-548. Residues 698–718 (VYLIIAICAVSSLLVLTLLLY) traverse the membrane as a helical segment. Residues 719-950 (TALRCSVPPT…GNSTTDNSDQ (232 aa)) are Cytoplasmic-facing. PXXP repeat units lie at residues 734–737 (PGKP), 799–802 (PRQP), 832–835 (PGGP), 873–876 (PGNP), and 891–894 (PGSP). The 5 X 4 AA repeats of P-X-X-P stretch occupies residues 734 to 894 (PGKPTLVCSS…PDKFIIPGSP (161 aa)). Disordered regions lie at residues 752-808 (QQRR…DWRY), 828-856 (LRAG…EVSP), and 871-890 (YGPG…KFII). Positions 900 to 950 (RQEPTNSQIDKSDFITFGKKEETKKKKKKKKGNKTQEKKEKGNSTTDNSDQ) are disordered. Basic and acidic residues predominate over residues 909-923 (DKSDFITFGKKEETK).

It is found in the cell membrane. The protein resides in the secreted. In terms of biological role, potential calcium-dependent cell-adhesion protein. May be involved in the establishment and maintenance of specific neuronal connections in the brain. This is Protocadherin alpha-1 (PCDHA1) from Homo sapiens (Human).